Reading from the N-terminus, the 153-residue chain is Small ribosomal subunit protein uS5c (153 aa).

In terms of domain architecture, S5 DRBM spans 11–74 (WQERVIQIRR…VDAKKQLINI (64 aa)).

Belongs to the universal ribosomal protein uS5 family. Part of the 30S ribosomal subunit. Contacts protein S4.

It is found in the plastid. Its subcellular location is the chloroplast. With S4 and S12 plays an important role in translational accuracy. This chain is Small ribosomal subunit protein uS5c (rps5), found in Cyanidioschyzon merolae (strain NIES-3377 / 10D) (Unicellular red alga).